The chain runs to 352 residues: Elongation factor Tu, mitochondrial (352 aa).

Residues 45–241 form the tr-type G domain; the sequence is RPHVNVGTIG…AIDTHIPLPH (197 aa). Residues 54–61 form a G1 region; sequence GHVDHGKT. GTP contacts are provided by Asp57, Gly59, Lys60, Thr61, and Thr62. Thr61 contacts Mg(2+). The G2 stretch occupies residues 95-99; it reads GITIN. The segment at 116 to 119 is G3; sequence DCPG. GTP contacts are provided by Asn171, Asp174, Ser209, Ala210, and Leu211. The G4 stretch occupies residues 171-174; that stretch reads NKAD. The tract at residues 209–211 is G5; it reads SAL.

The protein localises to the mitochondrion. The enzyme catalyses GTP + H2O = GDP + phosphate + H(+). Functionally, GTP hydrolase that promotes the GTP-dependent binding of aminoacyl-tRNA to the A-site of ribosomes during protein biosynthesis. This chain is Elongation factor Tu, mitochondrial, found in Gallus gallus (Chicken).